Consider the following 179-residue polypeptide: MSRIGKKPIDIPKGVTVSLAGDTVTVKGPKGELTRNIVAGIRLETAGDQILVQCEKEGKQEGAYRGLVRALVANMVEGVTNGFERVLEINGVGYRAEVKGSALNLSLGYSHPIEYALPKGISAEVEKQTKIIVRGIDKELVGATAAKIRSFRKPEPYKGKGVKYAEERIVRKAGKAGKK.

Belongs to the universal ribosomal protein uL6 family. In terms of assembly, part of the 50S ribosomal subunit.

This protein binds to the 23S rRNA, and is important in its secondary structure. It is located near the subunit interface in the base of the L7/L12 stalk, and near the tRNA binding site of the peptidyltransferase center. In Syntrophotalea carbinolica (strain DSM 2380 / NBRC 103641 / GraBd1) (Pelobacter carbinolicus), this protein is Large ribosomal subunit protein uL6.